The primary structure comprises 307 residues: Olfactory receptor 5M3 (307 aa).

Topologically, residues M1–V23 are extracellular. N-linked (GlcNAc...) asparagine glycosylation is present at N3. A helical transmembrane segment spans residues L24–M44. Residues V45 to Q52 are Cytoplasmic-facing. A helical transmembrane segment spans residues L53–S73. The Extracellular segment spans residues N74 to V97. C95 and C187 are oxidised to a cystine. A helical membrane pass occupies residues Q98 to F118. Residues D119–V137 lie on the Cytoplasmic side of the membrane. Residues V138–T158 form a helical membrane-spanning segment. Residues L159 to E194 are Extracellular-facing. Residues Y195 to S215 form a helical membrane-spanning segment. Over Y216–A235 the chain is Cytoplasmic. A helical transmembrane segment spans residues F236 to M256. Residues Y257–G269 lie on the Extracellular side of the membrane. The helical transmembrane segment at K270–L290 threads the bilayer. Residues R291–C307 lie on the Cytoplasmic side of the membrane.

It belongs to the G-protein coupled receptor 1 family.

It is found in the cell membrane. Odorant receptor. The polypeptide is Olfactory receptor 5M3 (OR5M3) (Homo sapiens (Human)).